We begin with the raw amino-acid sequence, 474 residues long: Lysosomal protective protein (474 aa).

The N-terminal stretch at 1 to 23 (MPGTALSPLLLLLLLSWASRNEA) is a signal peptide. Disulfide bonds link Cys-83/Cys-356, Cys-235/Cys-251, Cys-236/Cys-241, and Cys-276/Cys-325. Asn-140 carries N-linked (GlcNAc...) (high mannose) asparagine glycosylation. Residue Ser-173 is part of the active site. Asn-327 carries N-linked (GlcNAc...) (high mannose) asparagine glycosylation. Catalysis depends on residues Asp-394 and His-451.

Belongs to the peptidase S10 family. In terms of assembly, heterodimer of a 32 kDa chain and a 20 kDa chain; disulfide-linked.

The protein localises to the lysosome. It catalyses the reaction Release of a C-terminal amino acid with broad specificity.. In terms of biological role, protective protein appears to be essential for both the activity of beta-galactosidase and neuraminidase, it associates with these enzymes and exerts a protective function necessary for their stability and activity. This protein is also a carboxypeptidase and can deamidate tachykinins. The chain is Lysosomal protective protein (Ctsa) from Mus musculus (Mouse).